The chain runs to 99 residues: MATSNDQTNTKSSHSRTLLLLFIFLSLLLFSSLTIPMTRHQSTSMVAPFKRVLLESSVPASSTMDLRPKASTRRSRTSRRREFGNDAHEVPSGPNPISN.

Residues 1–34 form the signal peptide; it reads MATSNDQTNTKSSHSRTLLLLFIFLSLLLFSSLT. Residues 60–99 are disordered; sequence ASSTMDLRPKASTRRSRTSRRREFGNDAHEVPSGPNPISN. Positions 70–79 are enriched in basic residues; it reads ASTRRSRTSR. Residues 80–89 show a composition bias toward basic and acidic residues; that stretch reads RREFGNDAHE. Hydroxyproline is present on residues proline 91 and proline 94. O-linked (Ara...) hydroxyproline glycosylation occurs at proline 94.

It belongs to the CLV3/ESR signal peptide family. As to quaternary structure, CLE41p interacts specifically with the leucine-rich repeat receptor-like protein kinase TDR. Post-translationally, the O-glycosylation (arabinosylation) of the hydroxyproline Pro-94 enhances binding affinity of the CLE41p peptide for its receptor. As to expression, mostly expressed in inflorescence and roots, and, to a lower extent, in seedlings, flowers, leaves and siliques. Observed along the vascular strands in cotyledons, leaves and roots, but not in shoot apical meristems (SAM). Restricted to the phloem and the neighboring pericycle cells in the roots and hypocotyls.

It is found in the secreted. Its subcellular location is the extracellular space. Functionally, extracellular signal peptide that regulates cell fate. May act with TDR as a ligand-receptor pair in a signal transduction pathway that represses tracheary element differentiation but promotes the formation of procambial cells adjacent to phloem cells in the veins in an auxin-dependent manner. Regulates the transition of protophloem cells from proliferation to differentiation, thus impinging on postembryonic growth capacity of the root meristem; this signaling pathway requires CRN and CLV2. In Arabidopsis thaliana (Mouse-ear cress), this protein is CLAVATA3/ESR (CLE)-related protein 41.